We begin with the raw amino-acid sequence, 420 residues long: Nucleoporin NUP42 (420 aa).

A C3H1-type zinc finger spans residues 1–25; sequence MTICQFFLQGRCRFGDRCWNEHPGA. The FG 1 repeat unit spans residues 14-15; it reads FG. The disordered stretch occupies residues 25–111; the sequence is ARGAGGARQP…FASPLSDEQK (87 aa). The segment covering 42 to 67 has biased composition (polar residues); sequence SGNNRRGWNASSQRYSNVIQPSSFPK. 10 FG repeats span residues 82-83, 95-96, 218-219, 220-221, 228-229, 265-266, 271-272, 288-289, 345-346, and 364-365; these read FG. The segment covering 87–102 has biased composition (polar residues); the sequence is SGASTSRGFGSSQNPF. Positions 323 to 345 are disordered; the sequence is MAASPSGSTTAPPLRSGSSVVGF. The interval 365 to 420 is interaction with GLE1; the sequence is GGSGISTSVLASGAADNALFTPRDQLMKEELEQFQSQRFTLGKIPLKPPPVELLTV.

As to quaternary structure, probable component of the nuclear pore complex (NPC). Interacts with nuclear export protein NXF1. Interacts with GLE1. Able to form a heterotrimer with NUP155 and GLE1 in vitro. Interacts with XPO1. O-glycosylated.

The protein resides in the nucleus. It is found in the nuclear pore complex. The protein localises to the nucleus membrane. In terms of biological role, required for the export of mRNAs containing poly(A) tails from the nucleus into the cytoplasm. This chain is Nucleoporin NUP42 (Nup42), found in Mus musculus (Mouse).